The chain runs to 677 residues: Methionine--tRNA ligase (677 aa).

The 'HIGH' region motif lies at 15 to 25; that stretch reads PYANGSIHLGH. Zn(2+) is bound by residues Cys-146, Cys-149, Cys-159, and Cys-162. A 'KMSKS' region motif is present at residues 333–337; sequence KMSKS. Residue Lys-336 participates in ATP binding. The region spanning 575 to 677 is the tRNA-binding domain; it reads DFAKVDLRVA…AGAKPGHQVK (103 aa).

Belongs to the class-I aminoacyl-tRNA synthetase family. MetG type 1 subfamily. As to quaternary structure, homodimer. The cofactor is Zn(2+).

The protein localises to the cytoplasm. The enzyme catalyses tRNA(Met) + L-methionine + ATP = L-methionyl-tRNA(Met) + AMP + diphosphate. Its function is as follows. Is required not only for elongation of protein synthesis but also for the initiation of all mRNA translation through initiator tRNA(fMet) aminoacylation. The protein is Methionine--tRNA ligase of Shigella sonnei (strain Ss046).